An 860-amino-acid polypeptide reads, in one-letter code: Leucine--tRNA ligase (860 aa).

The 'HIGH' region signature appears at 42–52 (PYPSGRLHMGH). A 'KMSKS' region motif is present at residues 619–623 (KMSKS). Lysine 622 serves as a coordination point for ATP.

It belongs to the class-I aminoacyl-tRNA synthetase family.

The protein localises to the cytoplasm. The catalysed reaction is tRNA(Leu) + L-leucine + ATP = L-leucyl-tRNA(Leu) + AMP + diphosphate. In Shigella dysenteriae serotype 1 (strain Sd197), this protein is Leucine--tRNA ligase.